Here is a 393-residue protein sequence, read N- to C-terminus: Na(+)/H(+) antiporter NhaA (393 aa).

Helical transmembrane passes span 18–38 (AGGVLLALSALVALVISNSPW), 65–85 (MLIWINDLWMAVFFFLVGLEI), 101–121 (MLPAVAALGGMAVPALIYAAI), 131–151 (GWGIPMATDIAFALGLLVLLG), 160–180 (VFLTAVAIIDDLGAILVIAFF), 184–204 (NLSPTMLLAAGLGALVLLGLN), 210–230 (AVGPYVVVGLVIWVCVLKSGI), 260–280 (ALQPWVAFLVLPVFAFANAGV), 298–318 (IAFGLLIGKPIGVFGASWLLI), 334–354 (FFGVCVLCGVGFTMSLFIGSL), and 369–389 (IGVLLGSLLSGAAGVALLLAS).

It belongs to the NhaA Na(+)/H(+) (TC 2.A.33) antiporter family.

The protein localises to the cell inner membrane. The catalysed reaction is Na(+)(in) + 2 H(+)(out) = Na(+)(out) + 2 H(+)(in). Na(+)/H(+) antiporter that extrudes sodium in exchange for external protons. This chain is Na(+)/H(+) antiporter NhaA, found in Albidiferax ferrireducens (strain ATCC BAA-621 / DSM 15236 / T118) (Rhodoferax ferrireducens).